A 390-amino-acid chain; its full sequence is Phosphopentomutase (390 aa).

6 residues coordinate Mn(2+): aspartate 11, aspartate 283, histidine 288, aspartate 324, histidine 325, and histidine 336.

It belongs to the phosphopentomutase family. It depends on Mn(2+) as a cofactor.

The protein resides in the cytoplasm. It catalyses the reaction 2-deoxy-alpha-D-ribose 1-phosphate = 2-deoxy-D-ribose 5-phosphate. The catalysed reaction is alpha-D-ribose 1-phosphate = D-ribose 5-phosphate. Its pathway is carbohydrate degradation; 2-deoxy-D-ribose 1-phosphate degradation; D-glyceraldehyde 3-phosphate and acetaldehyde from 2-deoxy-alpha-D-ribose 1-phosphate: step 1/2. In terms of biological role, isomerase that catalyzes the conversion of deoxy-ribose 1-phosphate (dRib-1-P) and ribose 1-phosphate (Rib-1-P) to deoxy-ribose 5-phosphate (dRib-5-P) and ribose 5-phosphate (Rib-5-P), respectively. This is Phosphopentomutase from Clostridium novyi (strain NT).